Reading from the N-terminus, the 137-residue chain is Proofreading thioesterase EntH (137 aa).

Catalysis depends on E63, which acts as the Nucleophile or proton acceptor.

It belongs to the thioesterase PaaI family. In terms of assembly, homotetramer. Dimer of dimers. Interacts specifically with the aryl carrier protein (ArCP) domain of EntB.

It localises to the cytoplasm. The protein operates within siderophore biosynthesis; enterobactin biosynthesis. In terms of biological role, required for optimal enterobactin synthesis. Acts as a proofreading enzyme that prevents EntB misacylation by hydrolyzing the thioester bound existing between EntB and wrongly charged molecules. This is Proofreading thioesterase EntH from Citrobacter koseri (strain ATCC BAA-895 / CDC 4225-83 / SGSC4696).